A 350-amino-acid polypeptide reads, in one-letter code: uncharacterized protein (350 aa).

The next 3 membrane-spanning stretches (helical) occupy residues 10 to 30 (YSFI…EVIG), 51 to 71 (FAGI…VTLT), and 327 to 347 (ILSL…LKLF).

It belongs to the 1-acyl-sn-glycerol-3-phosphate acyltransferase family.

The protein resides in the endoplasmic reticulum membrane. This is an uncharacterized protein from Schizosaccharomyces pombe (strain 972 / ATCC 24843) (Fission yeast).